The following is a 947-amino-acid chain: Ionotropic receptor 25a (947 aa).

The signal sequence occupies residues 1–30 (MILMNPKTSKILWLLGFLSLLSSFSLEIAA). Over 31-562 (QTTQNINVLF…SLFKFLTVLE (532 aa)) the chain is Extracellular. 4 N-linked (GlcNAc...) asparagine glycosylation sites follow: Asn-78, Asn-177, Asn-277, and Asn-434. A helical membrane pass occupies residues 563–583 (TNVWLCILAAYFFTSFLMWIF). Residues 584–641 (DRWSPYSYQNNREKYKDDEEKREFNLKECLWFCMTSLTPQGGGEAPKNLSGRLVAATW) lie on the Cytoplasmic side of the membrane. The helical transmembrane segment at 642 to 662 (WLFGFIIIASYTANLAAFLTV) threads the bilayer. Over 663 to 858 (SRLDTPVESL…DQSDGISIQN (196 aa)) the chain is Extracellular. Asn-687, Asn-715, and Asn-762 each carry an N-linked (GlcNAc...) asparagine glycan. The helical transmembrane segment at 859-879 (IGGVFIVIFVGIGMACITLVF) threads the bilayer. Topologically, residues 880-947 (EYWWYRYRKN…QYPATFKPRF (68 aa)) are cytoplasmic.

It belongs to the glutamate-gated ion channel (TC 1.A.10.1) family. Interacts with nocte. In terms of tissue distribution, in the antenna, detected in neurons of the arista and also detected in sacculus neurons which innervate the first and second chambers (at protein level). Throughout the main body of the antenna, expressed in neurons which innervate the coeloconic class of olfactory sensilla (at protein level). Expressed in multiple cells of the dorsal organ including the dorsal organ cool cells (at protein level). Detected in femur and retina. Expressed in a subset of femur chordonotal neurons and antennal Johnston's Organ neurons.

Its subcellular location is the cell membrane. The protein resides in the cell projection. The protein localises to the axon. It localises to the dendrite. It is found in the perikaryon. Its subcellular location is the cilium. Its function is as follows. Integral part of various neural sensory systems in the antenna that provide the neural basis for the response to environmental changes in temperature (thermosensation), humidity (hygrosensation) and odor detection. Required for odor-evoked electrophysiological responses in multiple neuron classes in the antenna and is likely to function as part of an olfactory receptor complex with Ir76a and Ir76b. Together with Ir21a and Ir93a, mediates the response of the larval dorsal organ cool cells, a trio of cool-responsive neurons, to cooling and is required for cool avoidance behavior. Required in chordonotal organ neurons for behavioral synchronization to low-amplitude temperature cycles and mediates circadian clock resetting by temperature. Together with Ir40a and Ir93a, mediates the response of the hydrosensory sacculus neurons to changes in relative humidity, and is required for dry detection and humidiy preference behavior. The protein is Ionotropic receptor 25a of Drosophila melanogaster (Fruit fly).